Reading from the N-terminus, the 66-residue chain is Large ribosomal subunit protein bL33c (66 aa).

This sequence belongs to the bacterial ribosomal protein bL33 family.

It localises to the plastid. It is found in the chloroplast. This Cucumis sativus (Cucumber) protein is Large ribosomal subunit protein bL33c.